The chain runs to 780 residues: Aconitate hydratase, mitochondrial (780 aa).

Residues 1-27 (MAPYSLLVTRLQKALGVRQYHVASVLC) constitute a mitochondrion transit peptide. N6-succinyllysine is present on K31. K50 is modified (N6-acetyllysine; alternate). The residue at position 50 (K50) is an N6-succinyllysine; alternate. Q99 serves as a coordination point for substrate. N6-acetyllysine; alternate is present on residues K138 and K144. N6-succinyllysine; alternate occurs at positions 138 and 144. 192–194 (DSH) provides a ligand contact to substrate. N6-acetyllysine; alternate is present on K233. Residue K233 is modified to N6-succinyllysine; alternate. Residue C385 participates in [4Fe-4S] cluster binding. Residue K411 is modified to N6-succinyllysine. Residues C448 and C451 each coordinate [4Fe-4S] cluster. The substrate site is built by R474 and R479. N6-acetyllysine; alternate occurs at positions 517 and 523. 2 positions are modified to N6-succinyllysine; alternate: K517 and K523. Residues 524 to 537 (LEAPDADELPRSDF) are compositionally biased toward basic and acidic residues. The interval 524–560 (LEAPDADELPRSDFDPGQDTYQHPPKDSSGQRVDVSP) is disordered. Residue K549 is modified to N6-succinyllysine. Over residues 551-560 (SSGQRVDVSP) the composition is skewed to polar residues. The residue at position 559 (S559) is a Phosphoserine. N6-acetyllysine; alternate is present on K573. K573 is modified (N6-succinyllysine; alternate). 2 positions are modified to N6-succinyllysine: K577 and K591. Residue K605 is modified to N6-acetyllysine; alternate. The residue at position 605 (K605) is an N6-succinyllysine; alternate. R607 lines the substrate pocket. K628 bears the N6-succinyllysine mark. S670 carries the phosphoserine modification. Position 670–671 (670–671 (SR)) interacts with substrate. K689 carries the N6-succinyllysine modification. N6-acetyllysine; alternate occurs at positions 723 and 730. 2 positions are modified to N6-succinyllysine; alternate: K723 and K730. An N6-acetyllysine mark is found at K736, K739, and K743.

It belongs to the aconitase/IPM isomerase family. Monomer. The cofactor is [4Fe-4S] cluster. Forms covalent cross-links mediated by transglutaminase TGM2, between a glutamine and the epsilon-amino group of a lysine residue, forming homopolymers and heteropolymers.

It is found in the mitochondrion. It catalyses the reaction citrate = D-threo-isocitrate. It participates in carbohydrate metabolism; tricarboxylic acid cycle; isocitrate from oxaloacetate: step 2/2. Its function is as follows. Catalyzes the isomerization of citrate to isocitrate via cis-aconitate. This Mus musculus (Mouse) protein is Aconitate hydratase, mitochondrial (Aco2).